Here is a 252-residue protein sequence, read N- to C-terminus: Beta-carotene isomerase D27, chloroplastic (252 aa).

The transit peptide at 1–43 (MDSKMIAHNMSLTPTLAQWKKLRLKPKHTFVVGVLARPTDDIS) directs the protein to the chloroplast.

Fe cation is required as a cofactor. In terms of tissue distribution, highly expressed in roots. Expressed at low levels in leaves and stems.

It is found in the plastid. The protein localises to the chloroplast. The enzyme catalyses all-trans-beta-carotene = 9-cis-beta-carotene. Its function is as follows. Involved in strigolactones biosynthesis by catalyzing the isomerization of the C9-C10 double bond in all-trans-beta-carotene leading to 9-cis-beta-carotene and providing the substrate for CCD7. Strigolactones are hormones that inhibit tillering and shoot branching through the MAX-dependent pathway, contribute to the regulation of shoot architectural response to phosphate-limiting conditions and function as rhizosphere signals that stimulate hyphal branching of arbuscular mycorrhizal fungi and trigger seed germination of root parasitic weeds. The chain is Beta-carotene isomerase D27, chloroplastic from Medicago truncatula (Barrel medic).